The primary structure comprises 412 residues: Maintenance of mitochondrial morphology protein 1 (412 aa).

Topologically, residues 1-81 are lumenal; that stretch reads MTKELIKTEA…PANNWTFTQG (81 aa). A helical transmembrane segment spans residues 82 to 102; it reads LVLGQISVIFIIIVFVKFFVF. Over 103 to 412 the chain is Cytoplasmic; the sequence is ADSSTIPTKK…RSDSGTSENL (310 aa). The 218-residue stretch at 165–382 folds into the SMP-LTD domain; it reads SPESLDWFNV…EPRFQVVRLP (218 aa). The segment at 389 to 412 is disordered; that stretch reads KNTREPINKKTSVSRSDSGTSENL. The segment covering 397 to 412 has biased composition (polar residues); the sequence is KKTSVSRSDSGTSENL.

This sequence belongs to the MMM1 family. In terms of assembly, homodimer. Component of the ER-mitochondria encounter structure (ERMES) or MDM complex, composed of MMM1, MDM10, MDM12 and MDM34. An MMM1 homodimer associates with one molecule of MDM12 on each side in a pairwise head-to-tail manner, and the SMP-LTD domains of MMM1 and MDM12 generate a continuous hydrophobic tunnel for phospholipid trafficking.

The protein resides in the endoplasmic reticulum membrane. Its function is as follows. Component of the ERMES/MDM complex, which serves as a molecular tether to connect the endoplasmic reticulum (ER) and mitochondria. Components of this complex are involved in the control of mitochondrial shape and protein biogenesis, and function in nonvesicular lipid trafficking between the ER and mitochondria. The MDM12-MMM1 subcomplex functions in the major beta-barrel assembly pathway that is responsible for biogenesis of all outer membrane beta-barrel proteins, and acts in a late step after the SAM complex. The MDM10-MDM12-MMM1 subcomplex further acts in the TOM40-specific pathway after the action of the MDM12-MMM1 complex. Essential for establishing and maintaining the structure of mitochondria and maintenance of mtDNA nucleoids. In Candida tropicalis (strain ATCC MYA-3404 / T1) (Yeast), this protein is Maintenance of mitochondrial morphology protein 1.